The sequence spans 386 residues: Oxytocin receptor (386 aa).

The segment at 1 to 31 is disordered; that stretch reads MEGVLAANWSAEAVNSSAAPPEAEGNRTAGP. The Extracellular segment spans residues 1 to 38; it reads MEGVLAANWSAEAVNSSAAPPEAEGNRTAGPPQRNEAL. Asparagine 8, asparagine 15, and asparagine 26 each carry an N-linked (GlcNAc...) asparagine glycan. A helical membrane pass occupies residues 39-63; that stretch reads ARVEVAVLCLILFLALSGNACVLLA. Residues 64 to 74 are Cytoplasmic-facing; it reads LRTTRHKHSRL. Residues 75–97 traverse the membrane as a helical segment; the sequence is FFFMKHLSIADLVVAVFQVLPQL. Topologically, residues 98-113 are extracellular; that stretch reads LWDITFRFYGPDLLCR. Cysteine 112 and cysteine 187 form a disulfide bridge. A helical transmembrane segment spans residues 114 to 135; it reads LVKYLQVVGMFASTYLLLLMSL. At 136-154 the chain is on the cytoplasmic side; it reads DRCLAICQPLRALRRPADR. The chain crosses the membrane as a helical span at residues 155-175; that stretch reads LAVLATWLGCLVASAPQVHIF. The Extracellular segment spans residues 176–202; that stretch reads SLREVADGVFDCWAVFIQPWGPKAYIT. A helical membrane pass occupies residues 203-225; it reads WITLAVYIVPVIVLAACYGLISF. The Cytoplasmic segment spans residues 226-277; the sequence is KIWQNLRLKTAAEAAEAIAGTEGAAAGSRGRAALARVSSVKLISKAKIRTVK. The helical transmembrane segment at 278 to 296 threads the bilayer; the sequence is MTFIIVLAFIVCWTPFFFV. The Extracellular segment spans residues 297–311; that stretch reads QMWSVWDADAPKEAS. Residues 312 to 334 form a helical membrane-spanning segment; the sequence is AFIIAMLLASLNSCCNPWIYMLF. Residues 335 to 386 lie on the Cytoplasmic side of the membrane; the sequence is TGHLFHELVQRFLCCSSSHLKTSRPGETSVSKKSNSSTFVLSQHSSSQKSCS. Polar residues predominate over residues 355-375; sequence KTSRPGETSVSKKSNSSTFVL. Residues 355–386 form a disordered region; sequence KTSRPGETSVSKKSNSSTFVLSQHSSSQKSCS. Phosphoserine is present on residues serine 368 and serine 370. The span at 376 to 386 shows a compositional bias: low complexity; the sequence is SQHSSSQKSCS.

Belongs to the G-protein coupled receptor 1 family. Vasopressin/oxytocin receptor subfamily.

The protein localises to the cell membrane. Its function is as follows. Receptor for oxytocin. The activity of this receptor is mediated by G proteins which activate a phosphatidylinositol-calcium second messenger system. This Sus scrofa (Pig) protein is Oxytocin receptor (OXTR).